We begin with the raw amino-acid sequence, 99 residues long: Protein NCBP2AS2 (99 aa).

A disordered region spans residues Glu76–Ile99.

The sequence is that of Protein NCBP2AS2 from Homo sapiens (Human).